A 77-amino-acid chain; its full sequence is U-actitoxin-Avd12a (77 aa).

An N-terminal signal peptide occupies residues 1–23 (MALFRMLFLCAVLVLLTSKEGMS). A propeptide spanning residues 24 to 29 (YEEPEN) is cleaved from the precursor. The region spanning 31–73 (EGVACTGQYAESFCLNGGTCRYIQSIGEYYCICNGDYTGHRCE) is the EGF-like domain. 3 disulfides stabilise this stretch: Cys35–Cys50, Cys44–Cys61, and Cys63–Cys72.

Belongs to the EGF domain peptide family.

The protein resides in the secreted. It is found in the nematocyst. Functionally, has both toxic and EGF activity. Its EGF activity consists of rounding cells (morphological change) and inducing tyrosine phosphorylation of the EGFR in A431 cells, but with a lower potency that human EGF. This is U-actitoxin-Avd12a from Anemonia viridis (Snakelocks anemone).